A 298-amino-acid chain; its full sequence is Apolipoprotein E (298 aa).

The first 18 residues, 1–18 (MKILWAALVLTLLAGCRA), serve as a signal peptide directing secretion. A run of 6 repeats spans residues 74–95 (LLMEDTMKELKAYKSELEKEVG), 96–117 (PMAEDTKARLSKELQGAQARLA), 118–139 (GDMEEVRNRLSQYRSEVQAMLG), 140–161 (QSSEELRARLASHLRKLRKRLQ), 162–183 (RDAEELQKRLAVYKAGAQEGAE), and 223–244 (GRLEKVGSQARDRLEEVREQME). The 8 X 22 AA approximate tandem repeats stretch occupies residues 74–244 (LLMEDTMKEL…RLEEVREQME (171 aa)). Methionine 137 is subject to Methionine sulfoxide. A Phosphoserine modification is found at serine 141. The interval 152 to 162 (HLRKLRKRLQR) is LDL and other lipoprotein receptors binding. 156–159 (LRKR) contributes to the heparin binding site. The interval 204–272 (ALTSHPLRER…SWFEPMVEDL (69 aa)) is lipid-binding and lipoprotein association. 218-225 (GEQVRGRL) contributes to the heparin binding site. The segment at 260-272 (RLKSWFEPMVEDL) is specificity for association with VLDL.

It belongs to the apolipoprotein A1/A4/E family. In terms of assembly, homotetramer. May interact with ABCA1; functionally associated with ABCA1 in the biogenesis of HDLs. May interact with APP/A4 amyloid-beta peptide; the interaction is extremely stable in vitro but its physiological significance is unclear. May interact with MAPT. May interact with MAP2. In the cerebrospinal fluid, interacts with secreted SORL1. Interacts with PMEL; this allows the loading of PMEL luminal fragment on ILVs to induce fibril nucleation. Post-translationally, APOE exists as multiple glycosylated and sialylated glycoforms within cells and in plasma. The extent of glycosylation and sialylation are tissue and context specific. Glycated in plasma VLDL. In terms of processing, phosphorylated by FAM20C in the extracellular medium.

The protein localises to the secreted. The protein resides in the extracellular space. It is found in the extracellular matrix. It localises to the extracellular vesicle. Its subcellular location is the endosome. The protein localises to the multivesicular body. In terms of biological role, APOE is an apolipoprotein, a protein associating with lipid particles, that mainly functions in lipoprotein-mediated lipid transport between organs via the plasma and interstitial fluids. APOE is a core component of plasma lipoproteins and is involved in their production, conversion and clearance. Apolipoproteins are amphipathic molecules that interact both with lipids of the lipoprotein particle core and the aqueous environment of the plasma. As such, APOE associates with chylomicrons, chylomicron remnants, very low density lipoproteins (VLDL) and intermediate density lipoproteins (IDL) but shows a preferential binding to high-density lipoproteins (HDL). It also binds a wide range of cellular receptors including the LDL receptor/LDLR, the LDL receptor-related proteins LRP1, LRP2 and LRP8 and the very low-density lipoprotein receptor/VLDLR that mediate the cellular uptake of the APOE-containing lipoprotein particles. Finally, APOE also has a heparin-binding activity and binds heparan-sulfate proteoglycans on the surface of cells, a property that supports the capture and the receptor-mediated uptake of APOE-containing lipoproteins by cells. A main function of APOE is to mediate lipoprotein clearance through the uptake of chylomicrons, VLDLs, and HDLs by hepatocytes. APOE is also involved in the biosynthesis by the liver of VLDLs as well as their uptake by peripheral tissues ensuring the delivery of triglycerides and energy storage in muscle, heart and adipose tissues. By participating in the lipoprotein-mediated distribution of lipids among tissues, APOE plays a critical role in plasma and tissues lipid homeostasis. APOE is also involved in two steps of reverse cholesterol transport, the HDLs-mediated transport of cholesterol from peripheral tissues to the liver, and thereby plays an important role in cholesterol homeostasis. First, it is functionally associated with ABCA1 in the biogenesis of HDLs in tissues. Second, it is enriched in circulating HDLs and mediates their uptake by hepatocytes. APOE also plays an important role in lipid transport in the central nervous system, regulating neuron survival and sprouting. The chain is Apolipoprotein E (APOE) from Hydrochoerus hydrochaeris (Capybara).